The following is a 305-amino-acid chain: Ribonuclease Z (305 aa).

7 residues coordinate Zn(2+): His-61, His-63, Asp-65, His-66, His-138, Asp-208, and His-266. The active-site Proton acceptor is Asp-65.

It belongs to the RNase Z family. As to quaternary structure, homodimer. Zn(2+) serves as cofactor.

It catalyses the reaction Endonucleolytic cleavage of RNA, removing extra 3' nucleotides from tRNA precursor, generating 3' termini of tRNAs. A 3'-hydroxy group is left at the tRNA terminus and a 5'-phosphoryl group is left at the trailer molecule.. In terms of biological role, zinc phosphodiesterase, which displays some tRNA 3'-processing endonuclease activity. Probably involved in tRNA maturation, by removing a 3'-trailer from precursor tRNA. The chain is Ribonuclease Z from Methanosarcina acetivorans (strain ATCC 35395 / DSM 2834 / JCM 12185 / C2A).